Here is a 201-residue protein sequence, read N- to C-terminus: Small ribosomal subunit protein uS4 (201 aa).

A disordered region spans residues 26–47 (LSKKNYPPGQHGNNRRRKTSEY). The 63-residue stretch at 92–154 (ARLDNVVFRL…SKSLEVIADA (63 aa)) folds into the S4 RNA-binding domain.

It belongs to the universal ribosomal protein uS4 family. As to quaternary structure, part of the 30S ribosomal subunit. Contacts protein S5. The interaction surface between S4 and S5 is involved in control of translational fidelity.

Functionally, one of the primary rRNA binding proteins, it binds directly to 16S rRNA where it nucleates assembly of the body of the 30S subunit. Its function is as follows. With S5 and S12 plays an important role in translational accuracy. The polypeptide is Small ribosomal subunit protein uS4 (Porphyromonas gingivalis (strain ATCC 33277 / DSM 20709 / CIP 103683 / JCM 12257 / NCTC 11834 / 2561)).